We begin with the raw amino-acid sequence, 447 residues long: M-phase inducer phosphatase 3 (447 aa).

Ser2 is subject to N-acetylserine. A phosphoserine mark is found at Ser20, Ser38, Ser56, Ser60, and Ser63. Thr66 is subject to Phosphothreonine; by CDK1. The segment covering 81–90 has biased composition (polar residues); that stretch reads MSASPLTTSA. The tract at residues 81-109 is disordered; that stretch reads MSASPLTTSADLEDNGSLDSSGPLDRQLT. At Ser128 the chain carries Phosphoserine. Position 129 is a phosphothreonine (Thr129). Phosphoserine; by CDK1 is present on Ser192. A phosphoserine; by PLK3 mark is found at Ser213 and Ser220. In terms of domain architecture, Rhodanese spans 294–401; sequence VIERFYIIDC…FFPEYMELCD (108 aa). The active site involves Cys350. Position 445 is a phosphoserine (Ser445).

It belongs to the MPI phosphatase family. Interacts with MAPK14 and 14-3-3 proteins. When phosphorylated on Ser-128 and/or Thr-129, interacts with PLK1. Interacts with MARK3/C-TAK1. Phosphorylated by PLK4. Phosphorylated by PLK1, leading to activate the phosphatase activity. Phosphorylated by CHEK1 and MAPKAPK2. This phosphorylation creates a binding site for 14-3-3 protein and inhibits the phosphatase activity. Phosphorylation by PLK3 at Ser-213 promotes nuclear translocation. Ser-220 is a minor phosphorylation site. Phosphorylation by CDK1 occurs at G2 and G2-M transition and leads to increased activity. In terms of tissue distribution, spleen and thymus.

It is found in the nucleus. The enzyme catalyses O-phospho-L-tyrosyl-[protein] + H2O = L-tyrosyl-[protein] + phosphate. In terms of biological role, functions as a dosage-dependent inducer in mitotic control. Tyrosine protein phosphatase required for progression of the cell cycle. When phosphorylated, highly effective in activating G2 cells into prophase. Directly dephosphorylates CDK1 and activates its kinase activity. This is M-phase inducer phosphatase 3 (Cdc25c) from Mus musculus (Mouse).